The following is a 313-amino-acid chain: HPr kinase/phosphorylase (313 aa).

Residues His-140 and Lys-161 contribute to the active site. 155-162 (GNSGAGKS) provides a ligand contact to ATP. Ser-162 contributes to the Mg(2+) binding site. The Proton acceptor; for phosphorylation activity. Proton donor; for dephosphorylation activity role is filled by Asp-179. Residues 203-212 (IEVRGLGILN) form an important for the catalytic mechanism of both phosphorylation and dephosphorylation region. Glu-204 contributes to the Mg(2+) binding site. The active site involves Arg-246. The segment at 267–272 (PVAAGR) is important for the catalytic mechanism of dephosphorylation.

The protein belongs to the HPrK/P family. Homohexamer. Mg(2+) serves as cofactor.

It carries out the reaction [HPr protein]-L-serine + ATP = [HPr protein]-O-phospho-L-serine + ADP + H(+). The enzyme catalyses [HPr protein]-O-phospho-L-serine + phosphate + H(+) = [HPr protein]-L-serine + diphosphate. Catalyzes the ATP- as well as the pyrophosphate-dependent phosphorylation of a specific serine residue in HPr, a phosphocarrier protein of the phosphoenolpyruvate-dependent sugar phosphotransferase system (PTS). HprK/P also catalyzes the pyrophosphate-producing, inorganic phosphate-dependent dephosphorylation (phosphorolysis) of seryl-phosphorylated HPr (P-Ser-HPr). This chain is HPr kinase/phosphorylase, found in Azoarcus sp. (strain BH72).